Here is a 1226-residue protein sequence, read N- to C-terminus: uncharacterized protein (1226 aa).

This sequence belongs to the Mg-chelatase subunit H family.

This is an uncharacterized protein from Methanocaldococcus jannaschii (strain ATCC 43067 / DSM 2661 / JAL-1 / JCM 10045 / NBRC 100440) (Methanococcus jannaschii).